We begin with the raw amino-acid sequence, 335 residues long: Tetraacyldisaccharide 4'-kinase (335 aa).

58–65 is an ATP binding site; it reads TVGGNGKT.

This sequence belongs to the LpxK family.

The enzyme catalyses a lipid A disaccharide + ATP = a lipid IVA + ADP + H(+). The protein operates within glycolipid biosynthesis; lipid IV(A) biosynthesis; lipid IV(A) from (3R)-3-hydroxytetradecanoyl-[acyl-carrier-protein] and UDP-N-acetyl-alpha-D-glucosamine: step 6/6. Transfers the gamma-phosphate of ATP to the 4'-position of a tetraacyldisaccharide 1-phosphate intermediate (termed DS-1-P) to form tetraacyldisaccharide 1,4'-bis-phosphate (lipid IVA). This Dichelobacter nodosus (strain VCS1703A) protein is Tetraacyldisaccharide 4'-kinase.